Reading from the N-terminus, the 298-residue chain is ATP synthase gamma chain (298 aa).

The protein belongs to the ATPase gamma chain family. As to quaternary structure, F-type ATPases have 2 components, CF(1) - the catalytic core - and CF(0) - the membrane proton channel. CF(1) has five subunits: alpha(3), beta(3), gamma(1), delta(1), epsilon(1). CF(0) has three main subunits: a, b and c.

Its subcellular location is the cell inner membrane. Its function is as follows. Produces ATP from ADP in the presence of a proton gradient across the membrane. The gamma chain is believed to be important in regulating ATPase activity and the flow of protons through the CF(0) complex. The chain is ATP synthase gamma chain from Bacteroides thetaiotaomicron (strain ATCC 29148 / DSM 2079 / JCM 5827 / CCUG 10774 / NCTC 10582 / VPI-5482 / E50).